Here is a 409-residue protein sequence, read N- to C-terminus: Divalent metal cation transporter MntH (409 aa).

A run of 11 helical transmembrane segments spans residues 19 to 39 (LSLM…GNFA), 46 to 66 (ASFG…AMLI), 98 to 118 (WVQA…GAAI), 122 to 142 (LLLG…TFLI), 155 to 175 (LVIG…LVFS), 196 to 216 (AVFL…IYLH), 241 to 261 (IAMT…AAAF), 290 to 310 (IFGL…TLAG), 320 to 340 (FYIP…IVIL), 348 to 368 (ILVM…VPLL), and 388 to 408 (ILGK…LVSL).

It belongs to the NRAMP family.

It localises to the cell inner membrane. H(+)-stimulated, divalent metal cation uptake system. The polypeptide is Divalent metal cation transporter MntH (Yersinia enterocolitica serotype O:8 / biotype 1B (strain NCTC 13174 / 8081)).